The sequence spans 195 residues: Inosine triphosphate pyrophosphatase (195 aa).

13–18 (TGNAKK) provides a ligand contact to ITP. Residue glutamate 43 coordinates Mg(2+). Residues lysine 55, 71-72 (DT), lysine 88, 148-151 (FGWD), lysine 171, and 176-177 (HR) each bind ITP.

This sequence belongs to the HAM1 NTPase family. Homodimer. It depends on Mg(2+) as a cofactor. The cofactor is Mn(2+).

It localises to the cytoplasm. The enzyme catalyses ITP + H2O = IMP + diphosphate + H(+). It carries out the reaction dITP + H2O = dIMP + diphosphate + H(+). It catalyses the reaction XTP + H2O = XMP + diphosphate + H(+). The catalysed reaction is N(6)-hydroxy-dATP + H2O = N(6)-hydroxy-dAMP + diphosphate + H(+). Pyrophosphatase that hydrolyzes the non-canonical purine nucleotides inosine triphosphate (ITP), deoxyinosine triphosphate (dITP) as well as 2'-deoxy-N-6-hydroxylaminopurine triphosphate (dHAPTP) and xanthosine 5'-triphosphate (XTP) to their respective monophosphate derivatives. The enzyme does not distinguish between the deoxy- and ribose forms. Probably excludes non-canonical purines from RNA and DNA precursor pools, thus preventing their incorporation into RNA and DNA and avoiding chromosomal lesions. The chain is Inosine triphosphate pyrophosphatase (itpa) from Xenopus laevis (African clawed frog).